A 222-amino-acid chain; its full sequence is Kinetochore protein Spc25 (222 aa).

Residues 51–86 are a coiled coil; that stretch reads RHQRKVGKLQKVLMERREELDKRVSFIEELDRELEA.

The protein belongs to the SPC25 family. Component of the Ndc80 complex, which is composed of Ndc80, Nuf2 and Spc25.

The protein localises to the nucleus. Its subcellular location is the chromosome. The protein resides in the centromere. It localises to the kinetochore. Acts as a component of the essential kinetochore-associated Ndc80 complex, which is required for chromosome segregation and spindle checkpoint activity during meiosis and mitosis. Required for kinetochore integrity and the organization of stable microtubule binding sites in the outer plate of the kinetochore. Participates in SAC signaling that responds specifically to disruptions in spindle microtubule dynamics. The NDC80 complex synergistically enhances the affinity of the SKA1 complex for microtubules and may allow the NDC80 complex to track depolymerizing microtubules. This chain is Kinetochore protein Spc25, found in Drosophila mauritiana (Fruit fly).